The chain runs to 152 residues: uncharacterized protein (152 aa).

Residues 1–5 (MWFPQ) are Cytoplasmic-facing. The helical transmembrane segment at 6-26 (IIAGMAAGGAASAMTPGKVLF) threads the bilayer. Residues 27 to 38 (TNALGLGCSRSR) are Extracellular-facing. The helical transmembrane segment at 39–59 (GLFLEMFGTAVLCFTVLMTAV) threads the bilayer. Over 60-65 (EKRETN) the chain is Cytoplasmic. Residues 66-86 (FMAALPIGISLFMAHMALTGY) traverse the membrane as a helical segment. At 87–110 (TGTGVNPARSLGAAVAARYFPHYH) the chain is on the extracellular side. Positions 92–94 (NPA) match the NPA motif. Residues 111–131 (WIYWISPLLGAFLAWSVWQLL) form a helical membrane-spanning segment. The Cytoplasmic portion of the chain corresponds to 132–152 (QILDYTTYVNAEKAAGQKKED).

Belongs to the MIP/aquaporin (TC 1.A.8) family.

It is found in the membrane. This is an uncharacterized protein from Saccharomyces cerevisiae (strain YJM789) (Baker's yeast).